The sequence spans 116 residues: Ribonuclease P protein component (116 aa).

It belongs to the RnpA family. As to quaternary structure, consists of a catalytic RNA component (M1 or rnpB) and a protein subunit.

It carries out the reaction Endonucleolytic cleavage of RNA, removing 5'-extranucleotides from tRNA precursor.. RNaseP catalyzes the removal of the 5'-leader sequence from pre-tRNA to produce the mature 5'-terminus. It can also cleave other RNA substrates such as 4.5S RNA. The protein component plays an auxiliary but essential role in vivo by binding to the 5'-leader sequence and broadening the substrate specificity of the ribozyme. This Leuconostoc mesenteroides subsp. mesenteroides (strain ATCC 8293 / DSM 20343 / BCRC 11652 / CCM 1803 / JCM 6124 / NCDO 523 / NBRC 100496 / NCIMB 8023 / NCTC 12954 / NRRL B-1118 / 37Y) protein is Ribonuclease P protein component.